The following is a 377-amino-acid chain: Outer membrane porin N (377 aa).

The first 21 residues, Met-1–Ala-21, serve as a signal peptide directing secretion. Over residues Asn-175 to Gly-189 the composition is skewed to polar residues. Residues Asn-175–Asn-196 are disordered.

The protein belongs to the Gram-negative porin family. As to quaternary structure, homotrimer.

The protein localises to the cell outer membrane. Forms pores that allow passive diffusion of small molecules across the outer membrane. Non-specific porin. The sequence is that of Outer membrane porin N (ompN) from Escherichia coli (strain K12).